Consider the following 432-residue polypeptide: UDP-N-acetylmuramoylalanine--D-glutamate ligase (432 aa).

98-104 provides a ligand contact to ATP; it reads GTNGKST.

This sequence belongs to the MurCDEF family.

Its subcellular location is the cytoplasm. The catalysed reaction is UDP-N-acetyl-alpha-D-muramoyl-L-alanine + D-glutamate + ATP = UDP-N-acetyl-alpha-D-muramoyl-L-alanyl-D-glutamate + ADP + phosphate + H(+). It functions in the pathway cell wall biogenesis; peptidoglycan biosynthesis. Functionally, cell wall formation. Catalyzes the addition of glutamate to the nucleotide precursor UDP-N-acetylmuramoyl-L-alanine (UMA). The protein is UDP-N-acetylmuramoylalanine--D-glutamate ligase of Fusobacterium nucleatum subsp. nucleatum (strain ATCC 25586 / DSM 15643 / BCRC 10681 / CIP 101130 / JCM 8532 / KCTC 2640 / LMG 13131 / VPI 4355).